The primary structure comprises 434 residues: Pre-B-cell leukemia transcription factor 3 (434 aa).

The segment at 20–41 (SVQGGMALPPPPHGHEGADGDG) is disordered. Positions 32-41 (HGHEGADGDG) are enriched in basic and acidic residues. The PBC domain occupies 41 to 234 (GRKQDIGDIL…VMILRSRFLD (194 aa)). The PBC-A stretch occupies residues 48–127 (DILHQIMTIT…EGVSGPEKGG (80 aa)). The PBC-B stretch occupies residues 130–234 (AAAAAAAAAS…VMILRSRFLD (105 aa)). A DNA-binding region (homeobox; TALE-type) is located at residues 235-297 (ARRKRRNFSK…NKRIRYKKNI (63 aa)). Positions 326-341 (NQTNSPTTPNSGSSGS) are enriched in low complexity. 2 disordered regions span residues 326 to 349 (NQTN…NSGD) and 405 to 434 (ANGG…DTSN). Polar residues predominate over residues 405–422 (ANGGWQDATTPSSVTSPT).

This sequence belongs to the TALE/PBX homeobox family. Interacts with PBXIP1.

The protein localises to the nucleus. In terms of biological role, transcriptional activator that binds the sequence 5'-ATCAATCAA-3'. This chain is Pre-B-cell leukemia transcription factor 3 (Pbx3), found in Mus musculus (Mouse).